The sequence spans 1406 residues: DNA-directed RNA polymerase subunit beta' (1406 aa).

Zn(2+) is bound by residues Cys70, Cys72, Cys85, and Cys88. Mg(2+) is bound by residues Asp460, Asp462, and Asp464. The Zn(2+) site is built by Cys814, Cys888, Cys895, and Cys898.

The protein belongs to the RNA polymerase beta' chain family. As to quaternary structure, the RNAP catalytic core consists of 2 alpha, 1 beta, 1 beta' and 1 omega subunit. When a sigma factor is associated with the core the holoenzyme is formed, which can initiate transcription. The cofactor is Mg(2+). Requires Zn(2+) as cofactor.

The enzyme catalyses RNA(n) + a ribonucleoside 5'-triphosphate = RNA(n+1) + diphosphate. Its function is as follows. DNA-dependent RNA polymerase catalyzes the transcription of DNA into RNA using the four ribonucleoside triphosphates as substrates. In Yersinia pseudotuberculosis serotype O:1b (strain IP 31758), this protein is DNA-directed RNA polymerase subunit beta'.